The chain runs to 67 residues: Large ribosomal subunit protein bL35 (67 aa).

This sequence belongs to the bacterial ribosomal protein bL35 family.

This Brachyspira hyodysenteriae (strain ATCC 49526 / WA1) protein is Large ribosomal subunit protein bL35.